Consider the following 259-residue polypeptide: UPF0246 protein PSHAa2558 (259 aa).

The protein belongs to the UPF0246 family.

The sequence is that of UPF0246 protein PSHAa2558 from Pseudoalteromonas translucida (strain TAC 125).